The chain runs to 132 residues: Phosphoribosyl-AMP cyclohydrolase (132 aa).

Position 89 (Asp89) interacts with Mg(2+). Cys90 contacts Zn(2+). The Mg(2+) site is built by Asp91 and Asp93. Zn(2+) contacts are provided by Cys106 and Cys113.

Belongs to the PRA-CH family. Homodimer. Requires Mg(2+) as cofactor. It depends on Zn(2+) as a cofactor.

It localises to the cytoplasm. It catalyses the reaction 1-(5-phospho-beta-D-ribosyl)-5'-AMP + H2O = 1-(5-phospho-beta-D-ribosyl)-5-[(5-phospho-beta-D-ribosylamino)methylideneamino]imidazole-4-carboxamide. It functions in the pathway amino-acid biosynthesis; L-histidine biosynthesis; L-histidine from 5-phospho-alpha-D-ribose 1-diphosphate: step 3/9. In terms of biological role, catalyzes the hydrolysis of the adenine ring of phosphoribosyl-AMP. The sequence is that of Phosphoribosyl-AMP cyclohydrolase from Renibacterium salmoninarum (strain ATCC 33209 / DSM 20767 / JCM 11484 / NBRC 15589 / NCIMB 2235).